The primary structure comprises 340 residues: Tryptophan--tRNA ligase (340 aa).

ATP contacts are provided by residues 11 to 13 and 19 to 20; these read RPT and GH. A 'HIGH' region motif is present at residues 12–20; it reads PTGKLHLGH. Position 140 (Asp140) interacts with L-tryptophan. Residues 152–154, Leu194, and 202–206 contribute to the ATP site; these read GND and KMSKS. The 'KMSKS' region motif lies at 202 to 206; the sequence is KMSKS.

This sequence belongs to the class-I aminoacyl-tRNA synthetase family. In terms of assembly, homodimer.

The protein localises to the cytoplasm. It carries out the reaction tRNA(Trp) + L-tryptophan + ATP = L-tryptophyl-tRNA(Trp) + AMP + diphosphate + H(+). Its function is as follows. Catalyzes the attachment of tryptophan to tRNA(Trp). This chain is Tryptophan--tRNA ligase, found in Streptococcus mutans serotype c (strain ATCC 700610 / UA159).